The sequence spans 137 residues: DNA-directed RNA polymerase subunit omega (137 aa).

A disordered region spans residues Asp-78–Asp-137. A compositionally biased stretch (low complexity) spans Ala-84–Ser-103. Residues Gln-110–Arg-121 show a composition bias toward basic and acidic residues.

This sequence belongs to the RNA polymerase subunit omega family. In terms of assembly, the RNAP catalytic core consists of 2 alpha, 1 beta, 1 beta' and 1 omega subunit. When a sigma factor is associated with the core the holoenzyme is formed, which can initiate transcription.

The enzyme catalyses RNA(n) + a ribonucleoside 5'-triphosphate = RNA(n+1) + diphosphate. In terms of biological role, promotes RNA polymerase assembly. Latches the N- and C-terminal regions of the beta' subunit thereby facilitating its interaction with the beta and alpha subunits. This chain is DNA-directed RNA polymerase subunit omega, found in Methylobacterium sp. (strain 4-46).